Consider the following 483-residue polypeptide: Glutamate--tRNA ligase (483 aa).

Positions 9-19 (PSPTGFLHIGN) match the 'HIGH' region motif. Positions 253–257 (KLSKR) match the 'KMSKS' region motif. K256 contributes to the ATP binding site.

This sequence belongs to the class-I aminoacyl-tRNA synthetase family. Glutamate--tRNA ligase type 1 subfamily. In terms of assembly, monomer.

The protein localises to the cytoplasm. The enzyme catalyses tRNA(Glu) + L-glutamate + ATP = L-glutamyl-tRNA(Glu) + AMP + diphosphate. In terms of biological role, catalyzes the attachment of glutamate to tRNA(Glu) in a two-step reaction: glutamate is first activated by ATP to form Glu-AMP and then transferred to the acceptor end of tRNA(Glu). In Mycoplasma mycoides subsp. mycoides SC (strain CCUG 32753 / NCTC 10114 / PG1), this protein is Glutamate--tRNA ligase.